The chain runs to 601 residues: MSRFKRGAHVDSGAGFRQEKEDCPVPYGLLKAARKSGQLNLSGRGLTEVPASVWRLNLDTPQEAKQNVSFGAEDRWWEQTDLTKLLLSSNKLQSIPDDVKLLPALVVLDIHDNQLSSLPDSIGDLEQLQKLILSHNKLTELPSGVWRLTNLRCLHLQQNLIEQIPRDLGQLVNLDELDLSNNHLIDIPESLANLQNLVKLDLSCNKLKSLPPAISQMKNLRMLDCSRNQMESIPPVLAQMESLEQLYLRHNKLRYLPELPCCKTLKELHCGNNQIEVLEAEHLKHLNALSLLELRDNKVKSLPEEITLLQGLERLDLTNNDISSLPCGLGTLPKLKSLSLEGNPLRAIRRDLLTKGTGELLKYLRSRVQEPPNGGLKEEPKTAMTFPSQAKINVHAIKTLKTLDYSEKQDATIPDDVFDAVDGNPVANVNFSKNQLTAVPHRIVDLKDSLADINLGFNKLTTIPADFCHLKQLMHIDLRNNLLISLPMELEGLIKLRSVILSFNRFKSFPEVLYRIPSLETILISSNQVGGIDAVQMKTLSRLSTLDLSNNDIMQVPPELGNCTSLRALMLDGNPFRNPRAAILIKGTDAVLEYLRSRIPT.

LRR repeat units lie at residues 33 to 56, 79 to 101, 102 to 124, 125 to 148, 150 to 170, 171 to 193, 194 to 217, 219 to 239, 240 to 264, 266 to 285, 286 to 308, 309 to 334, 336 to 355, 397 to 420, 423 to 446, 447 to 469, 470 to 492, 493 to 516, 518 to 539, 540 to 563, and 565 to 586; these read ARKSGQLNLSGRGLTEVPASVWRL, QTDLTKLLLSSNKLQSIPDDVKL, LPALVVLDIHDNQLSSLPDSIGD, LEQLQKLILSHNKLTELPSGVWRL, NLRCLHLQQNLIEQIPRDLGQ, LVNLDELDLSNNHLIDIPESLAN, LQNLVKLDLSCNKLKSLPPAISQM, NLRMLDCSRNQMESIPPVLAQ, MESLEQLYLRHNKLRYLPELPCCKT, KELHCGNNQIEVLEAEHLKH, LNALSLLELRDNKVKSLPEEITL, LQGLERLDLTNNDISSLPCGLGTLPK, KSLSLEGNPLRAIRRDLLTK, IKTLKTLDYSEKQDATIPDDVFDA, GNPVANVNFSKNQLTAVPHRIVDL, KDSLADINLGFNKLTTIPADFCH, LKQLMHIDLRNNLLISLPMELEG, LIKLRSVILSFNRFKSFPEVLYRI, SLETILISSNQVGGIDAVQMKT, LSRLSTLDLSNNDIMQVPPELGNC, and SLRALMLDGNPFRNPRAAILIK.

The protein is Leucine-rich repeat-containing protein 40 (lrrc40) of Danio rerio (Zebrafish).